A 164-amino-acid polypeptide reads, in one-letter code: Ribosome maturation factor RimM (164 aa).

In terms of domain architecture, PRC barrel spans 92–164 (PDSEYYVANL…FVVIVPPEFI (73 aa)).

It belongs to the RimM family. In terms of assembly, binds ribosomal protein uS19.

It localises to the cytoplasm. In terms of biological role, an accessory protein needed during the final step in the assembly of 30S ribosomal subunit, possibly for assembly of the head region. Essential for efficient processing of 16S rRNA. May be needed both before and after RbfA during the maturation of 16S rRNA. It has affinity for free ribosomal 30S subunits but not for 70S ribosomes. The sequence is that of Ribosome maturation factor RimM from Orientia tsutsugamushi (strain Ikeda) (Rickettsia tsutsugamushi).